An 88-amino-acid polypeptide reads, in one-letter code: Defensin-like protein 24 (88 aa).

A signal peptide spans 1-23; sequence MASSKFVLFAILALSLLLSGTEA. Intrachain disulfides connect C37–C87, C47–C72, C56–C83, and C60–C85.

This sequence belongs to the DEFL family.

The protein resides in the secreted. The chain is Defensin-like protein 24 from Arabidopsis thaliana (Mouse-ear cress).